We begin with the raw amino-acid sequence, 318 residues long: Formimidoylglutamase (318 aa).

Mn(2+) is bound by residues histidine 124, aspartate 153, histidine 155, aspartate 157, cysteine 241, and aspartate 243.

The protein belongs to the arginase family. The cofactor is Mn(2+).

It catalyses the reaction N-formimidoyl-L-glutamate + H2O = formamide + L-glutamate. Its pathway is amino-acid degradation; L-histidine degradation into L-glutamate; L-glutamate from N-formimidoyl-L-glutamate (hydrolase route): step 1/1. Catalyzes the conversion of N-formimidoyl-L-glutamate to L-glutamate and formamide. The sequence is that of Formimidoylglutamase from Fusobacterium nucleatum subsp. nucleatum (strain ATCC 25586 / DSM 15643 / BCRC 10681 / CIP 101130 / JCM 8532 / KCTC 2640 / LMG 13131 / VPI 4355).